A 160-amino-acid chain; its full sequence is Coat protein TP3 (160 aa).

It is found in the virion. The sequence is that of Coat protein TP3 from Thermoproteus tenax (TTV1).